The chain runs to 158 residues: Ribosome maturation factor RimP (158 aa).

The protein belongs to the RimP family.

The protein resides in the cytoplasm. Functionally, required for maturation of 30S ribosomal subunits. The chain is Ribosome maturation factor RimP from Pseudomonas savastanoi pv. phaseolicola (strain 1448A / Race 6) (Pseudomonas syringae pv. phaseolicola (strain 1448A / Race 6)).